Here is a 284-residue protein sequence, read N- to C-terminus: Efem/EfeO family lipoprotein (284 aa).

An N-terminal signal peptide occupies residues 1–17 (MKKLTTLLLASTLLIAA). Cysteine 18 carries the N-palmitoyl cysteine lipid modification. Residue cysteine 18 is the site of S-diacylglycerol cysteine attachment.

Belongs to the EfeM/EfeO family.

The protein resides in the cell membrane. This chain is Efem/EfeO family lipoprotein, found in Staphylococcus aureus (strain MSSA476).